Reading from the N-terminus, the 500-residue chain is Cytochrome P450 71B37 (500 aa).

The chain crosses the membrane as a helical span at residues 2–22 (ATIWFLPLLFLSCLLLAALRL). Position 440 (Cys-440) interacts with heme.

It belongs to the cytochrome P450 family. The cofactor is heme.

It localises to the membrane. The sequence is that of Cytochrome P450 71B37 (CYP71B37) from Arabidopsis thaliana (Mouse-ear cress).